The sequence spans 404 residues: Exodeoxyribonuclease 7 large subunit (404 aa).

Belongs to the XseA family. Heterooligomer composed of large and small subunits.

The protein localises to the cytoplasm. The catalysed reaction is Exonucleolytic cleavage in either 5'- to 3'- or 3'- to 5'-direction to yield nucleoside 5'-phosphates.. Its function is as follows. Bidirectionally degrades single-stranded DNA into large acid-insoluble oligonucleotides, which are then degraded further into small acid-soluble oligonucleotides. This chain is Exodeoxyribonuclease 7 large subunit, found in Fusobacterium nucleatum subsp. nucleatum (strain ATCC 25586 / DSM 15643 / BCRC 10681 / CIP 101130 / JCM 8532 / KCTC 2640 / LMG 13131 / VPI 4355).